The sequence spans 523 residues: 2-isopropylmalate synthase (523 aa).

The 263-residue stretch at 5–267 (VIIFDTTLRD…ETGINAKEIH (263 aa)) folds into the Pyruvate carboxyltransferase domain. Residues aspartate 14, histidine 202, histidine 204, and asparagine 238 each coordinate Mn(2+). Positions 392–523 (KLQQLVVHSD…QQEKQVLGGV (132 aa)) are regulatory domain.

Belongs to the alpha-IPM synthase/homocitrate synthase family. LeuA type 1 subfamily. In terms of assembly, homodimer. Mn(2+) serves as cofactor.

It localises to the cytoplasm. It catalyses the reaction 3-methyl-2-oxobutanoate + acetyl-CoA + H2O = (2S)-2-isopropylmalate + CoA + H(+). It functions in the pathway amino-acid biosynthesis; L-leucine biosynthesis; L-leucine from 3-methyl-2-oxobutanoate: step 1/4. Its function is as follows. Catalyzes the condensation of the acetyl group of acetyl-CoA with 3-methyl-2-oxobutanoate (2-ketoisovalerate) to form 3-carboxy-3-hydroxy-4-methylpentanoate (2-isopropylmalate). This chain is 2-isopropylmalate synthase, found in Shewanella piezotolerans (strain WP3 / JCM 13877).